Reading from the N-terminus, the 121-residue chain is UPF0102 protein BF0706 (121 aa).

Belongs to the UPF0102 family.

The chain is UPF0102 protein BF0706 from Bacteroides fragilis (strain YCH46).